A 232-amino-acid chain; its full sequence is Ribonuclease 3 (232 aa).

Residues Q5–D134 enclose the RNase III domain. Position 47 (E47) interacts with Mg(2+). D51 is an active-site residue. Residues D120 and E123 each contribute to the Mg(2+) site. E123 is an active-site residue. Residues D160–D229 enclose the DRBM domain.

It belongs to the ribonuclease III family. As to quaternary structure, homodimer. The cofactor is Mg(2+).

Its subcellular location is the cytoplasm. The enzyme catalyses Endonucleolytic cleavage to 5'-phosphomonoester.. Its function is as follows. Digests double-stranded RNA. Involved in the processing of primary rRNA transcript to yield the immediate precursors to the large and small rRNAs (23S and 16S). Processes some mRNAs, and tRNAs when they are encoded in the rRNA operon. Processes pre-crRNA and tracrRNA of type II CRISPR loci if present in the organism. This chain is Ribonuclease 3, found in Streptococcus pneumoniae serotype 4 (strain ATCC BAA-334 / TIGR4).